We begin with the raw amino-acid sequence, 423 residues long: GPI mannosyltransferase 2 (423 aa).

9 helical membrane-spanning segments follow: residues 11–31 (ILSL…IALG), 106–126 (WEAL…VLAL), 139–159 (LAYL…ISAP), 160–180 (YAES…AISL), 197–219 (GLSY…LFAV), 240–260 (LVAP…PQVL), 299–319 (YWTP…TILL), 351–371 (LAAI…VQII), and 400–420 (GVIV…ASFL).

It belongs to the PIGV family.

It is found in the endoplasmic reticulum membrane. The protein operates within glycolipid biosynthesis; glycosylphosphatidylinositol-anchor biosynthesis. Its function is as follows. Mannosyltransferase involved in glycosylphosphatidylinositol-anchor biosynthesis. Transfers the second mannose to the glycosylphosphatidylinositol during GPI precursor assembly. This Gibberella zeae (strain ATCC MYA-4620 / CBS 123657 / FGSC 9075 / NRRL 31084 / PH-1) (Wheat head blight fungus) protein is GPI mannosyltransferase 2 (GPI18).